The primary structure comprises 193 residues: Ion-translocating oxidoreductase complex subunit A (193 aa).

A run of 6 helical transmembrane segments spans residues 5-25 (VLLLIGTVLVNNFVLVQFLGL), 39-59 (IGMSLATTFVLTLASVTSYLV), 63-83 (ILIPLDITYLRTMSFILVIAV), 102-122 (LLGIFLPLITTNCAVLGVALL), 134-154 (AVYGFGAAVGFSLVLVLFAAL), and 171-191 (SIALITAGLMSMAFMGFTGLV).

Belongs to the NqrDE/RnfAE family. In terms of assembly, the complex is composed of six subunits: RnfA, RnfB, RnfC, RnfD, RnfE and RnfG.

Its subcellular location is the cell inner membrane. Its function is as follows. Part of a membrane-bound complex that couples electron transfer with translocation of ions across the membrane. The protein is Ion-translocating oxidoreductase complex subunit A of Pseudoalteromonas translucida (strain TAC 125).